A 607-amino-acid polypeptide reads, in one-letter code: Glutamine--fructose-6-phosphate aminotransferase [isomerizing] (607 aa).

Cys-2 serves as the catalytic Nucleophile; for GATase activity. One can recognise a Glutamine amidotransferase type-2 domain in the interval 2–217 (CGIIGIIGND…DGDWAVLTRN (216 aa)). SIS domains are found at residues 283–422 (IGID…ARGA) and 455–597 (VCHD…VDQP). Lys-602 (for Fru-6P isomerization activity) is an active-site residue.

In terms of assembly, homodimer.

Its subcellular location is the cytoplasm. The enzyme catalyses D-fructose 6-phosphate + L-glutamine = D-glucosamine 6-phosphate + L-glutamate. Catalyzes the first step in hexosamine metabolism, converting fructose-6P into glucosamine-6P using glutamine as a nitrogen source. The protein is Glutamine--fructose-6-phosphate aminotransferase [isomerizing] of Brucella melitensis biotype 1 (strain ATCC 23456 / CCUG 17765 / NCTC 10094 / 16M).